A 205-amino-acid polypeptide reads, in one-letter code: Small ribosomal subunit protein mS26 (205 aa).

A mitochondrion-targeting transit peptide spans 1–26; the sequence is MLRALSTLGARPLGRPPAQFLLLARG.

It belongs to the mitochondrion-specific ribosomal protein mS26 family. In terms of assembly, component of the mitochondrial ribosome small subunit (28S) which comprises a 12S rRNA and about 30 distinct proteins.

The protein resides in the mitochondrion. The protein is Small ribosomal subunit protein mS26 (MRPS26) of Bos taurus (Bovine).